The primary structure comprises 142 residues: DNA-directed RNA polymerase II subunit RPB4 (142 aa).

This sequence belongs to the eukaryotic RPB4 RNA polymerase subunit family. As to quaternary structure, component of the RNA polymerase II (Pol II) core complex consisting of 12 subunits: a ten-subunit catalytic core composed of POLR2A/RPB1, POLR2B/RPB2, POLR2C/RPB3, POLR2I/RPB9, POLR2J/RPB11, POLR2E/RPABC1, POLR2F/RPABC2, POLR2H/RPABC3, POLR2K/RPABC4 and POLR2L/RPABC5 and a mobile stalk composed of two subunits POLR2D/RPB4 and POLR2G/RPB7, protruding from the core and functioning primarily in transcription initiation. Part of Pol II(G) complex, in which Pol II core associates with an additional subunit POLR2M; unlike conventional Pol II, Pol II(G) functions as a transcriptional repressor. Part of Pol II pre-initiation complex (PIC), in which Pol II core assembles with Mediator, general transcription factors and other specific initiation factors including GTF2E1, GTF2E2, GTF2F1, GTF2F2, TCEA1, ERCC2, ERCC3, GTF2H2, GTF2H3, GTF2H4, GTF2H5, GTF2A1, GTF2A2, GTF2B and TBP; this large multi-subunit PIC complex mediates DNA unwinding and targets Pol II core to the transcription start site where the first phosphodiester bond forms.

It localises to the nucleus. Its function is as follows. Core component of RNA polymerase II (Pol II), a DNA-dependent RNA polymerase which synthesizes mRNA precursors and many functional non-coding RNAs using the four ribonucleoside triphosphates as substrates. Pol II is the central component of the basal RNA polymerase II transcription machinery. It is composed of mobile elements that move relative to each other. POLR2D/RPB4 is part of a subcomplex with POLR2G/RPB7 that binds to a pocket formed by POLR2A/RPB1, POLR2B/RPB2 and POLR2F/RPABC2 at the base of the clamp element. The POLR2D/RPB4-POLR2G/RPB7 subcomplex seems to lock the clamp via POLR2G/RPB7 in the closed conformation thus preventing double-stranded DNA to enter the active site cleft. The POLR2D/RPB4-POLR2G/RPB7 subcomplex binds single-stranded DNA and RNA. The protein is DNA-directed RNA polymerase II subunit RPB4 (POLR2D) of Bos taurus (Bovine).